The sequence spans 262 residues: Pyridoxine 5'-phosphate synthase (262 aa).

Asparagine 6 contributes to the 3-amino-2-oxopropyl phosphate binding site. 8–9 (DH) contributes to the 1-deoxy-D-xylulose 5-phosphate binding site. 3-amino-2-oxopropyl phosphate is bound at residue arginine 17. The active-site Proton acceptor is the histidine 43. 1-deoxy-D-xylulose 5-phosphate-binding residues include arginine 45 and histidine 50. The active-site Proton acceptor is glutamate 70. Threonine 102 serves as a coordination point for 1-deoxy-D-xylulose 5-phosphate. Histidine 215 (proton donor) is an active-site residue. 3-amino-2-oxopropyl phosphate contacts are provided by residues glycine 216 and 237-238 (GH).

This sequence belongs to the PNP synthase family. Homooctamer; tetramer of dimers.

The protein localises to the cytoplasm. The enzyme catalyses 3-amino-2-oxopropyl phosphate + 1-deoxy-D-xylulose 5-phosphate = pyridoxine 5'-phosphate + phosphate + 2 H2O + H(+). It participates in cofactor biosynthesis; pyridoxine 5'-phosphate biosynthesis; pyridoxine 5'-phosphate from D-erythrose 4-phosphate: step 5/5. Its function is as follows. Catalyzes the complicated ring closure reaction between the two acyclic compounds 1-deoxy-D-xylulose-5-phosphate (DXP) and 3-amino-2-oxopropyl phosphate (1-amino-acetone-3-phosphate or AAP) to form pyridoxine 5'-phosphate (PNP) and inorganic phosphate. This Helicobacter pylori (strain HPAG1) protein is Pyridoxine 5'-phosphate synthase.